The chain runs to 99 residues: Large ribosomal subunit protein eL30 (99 aa).

It belongs to the eukaryotic ribosomal protein eL30 family. In terms of assembly, part of the 50S ribosomal subunit.

In Pyrococcus furiosus (strain ATCC 43587 / DSM 3638 / JCM 8422 / Vc1), this protein is Large ribosomal subunit protein eL30.